The chain runs to 327 residues: Leucotoxin LukD (327 aa).

An N-terminal signal peptide occupies residues 1 to 26 (MKIEKLGKSSVASSIALLLLSNTVDA).

The protein belongs to the aerolysin family. In terms of assembly, toxicity requires sequential binding and synergistic association of a class S and a class F component which form heterooligomeric complexes. LukE (class S) associates with LukD (class F). LukD can also associate with HlgA.

It is found in the secreted. Part of a bi-component leucotoxin that acts by forming pores in the membrane of the target cells. LukE-LukD is as effective as the Panton-Valentine leucocidin (PVL) for inducing dermonecrosis when injected in the rabbit skin, but not hemolytic and poorly leucotoxic on human blood cells compared to other leucotoxins expressed by S.aureus. HlgA-LukD is a Ca(2+) channel inducer. This Staphylococcus aureus protein is Leucotoxin LukD (lukD).